A 360-amino-acid polypeptide reads, in one-letter code: WAT1-related protein At3g28070 (360 aa).

The next 10 membrane-spanning stretches (helical) occupy residues A15–F35, I45–F65, I84–Y104, T108–F128, S140–Y160, W190–L210, V224–E244, P248–V268, L286–F306, and L311–W331. Residues G30 to I158 form the EamA domain.

It belongs to the drug/metabolite transporter (DMT) superfamily. Plant drug/metabolite exporter (P-DME) (TC 2.A.7.4) family.

The protein resides in the membrane. This Arabidopsis thaliana (Mouse-ear cress) protein is WAT1-related protein At3g28070.